We begin with the raw amino-acid sequence, 103 residues long: Pyrimidine/purine nucleoside phosphorylase (103 aa).

Belongs to the nucleoside phosphorylase PpnP family.

It carries out the reaction a purine D-ribonucleoside + phosphate = a purine nucleobase + alpha-D-ribose 1-phosphate. The enzyme catalyses adenosine + phosphate = alpha-D-ribose 1-phosphate + adenine. It catalyses the reaction cytidine + phosphate = cytosine + alpha-D-ribose 1-phosphate. The catalysed reaction is guanosine + phosphate = alpha-D-ribose 1-phosphate + guanine. It carries out the reaction inosine + phosphate = alpha-D-ribose 1-phosphate + hypoxanthine. The enzyme catalyses thymidine + phosphate = 2-deoxy-alpha-D-ribose 1-phosphate + thymine. It catalyses the reaction uridine + phosphate = alpha-D-ribose 1-phosphate + uracil. The catalysed reaction is xanthosine + phosphate = alpha-D-ribose 1-phosphate + xanthine. Catalyzes the phosphorolysis of diverse nucleosides, yielding D-ribose 1-phosphate and the respective free bases. Can use uridine, adenosine, guanosine, cytidine, thymidine, inosine and xanthosine as substrates. Also catalyzes the reverse reactions. The sequence is that of Pyrimidine/purine nucleoside phosphorylase from Shewanella baltica (strain OS155 / ATCC BAA-1091).